A 230-amino-acid polypeptide reads, in one-letter code: Ribonuclease 3 (230 aa).

Residues 10–133 (DPRLLSRIGY…IIGAIYLDSS (124 aa)) form the RNase III domain. A Mg(2+)-binding site is contributed by Glu-46. Asp-50 is a catalytic residue. The Mg(2+) site is built by Asp-119 and Glu-122. Residue Glu-122 is part of the active site. The 70-residue stretch at 161–230 (DPKSRLQEYL…AAEILKLLEQ (70 aa)) folds into the DRBM domain.

The protein belongs to the ribonuclease III family. As to quaternary structure, homodimer. It depends on Mg(2+) as a cofactor.

It is found in the cytoplasm. It catalyses the reaction Endonucleolytic cleavage to 5'-phosphomonoester.. Functionally, digests double-stranded RNA. Involved in the processing of primary rRNA transcript to yield the immediate precursors to the large and small rRNAs (23S and 16S). Processes some mRNAs, and tRNAs when they are encoded in the rRNA operon. Processes pre-crRNA and tracrRNA of type II CRISPR loci if present in the organism. This Acinetobacter baumannii (strain AB307-0294) protein is Ribonuclease 3 (rnc).